The following is a 413-amino-acid chain: Serine protease inhibitor A3L (413 aa).

A signal peptide spans 1–28 (MAFIAALGLLMAGICPAVLCDGTLGRDT). Ser30 bears the Phosphoserine mark. Residues Asn102, Asn182, Asn220, and Asn267 are each glycosylated (N-linked (GlcNAc...) asparagine). The RCL stretch occupies residues 365–389 (GTEATAATGVATVIRRQPRTLNFNR).

It belongs to the serpin family. N-glycosylated. As to expression, liver.

It localises to the secreted. In Rattus norvegicus (Rat), this protein is Serine protease inhibitor A3L (Serpina3l).